The following is a 212-amino-acid chain: Floral homeotic protein PMADS 2 (212 aa).

The MADS-box domain maps to 3–58 (RGKIEIKRIENSSNRQVTYSKRRNGIIKKAKEITVLCDAKVSLIIFGNSGKMHEYC). The K-box domain occupies 84–170 (HENLSNEIDR…QYALHQKEMA (87 aa)).

As to expression, predominantly expressed in petals and stamens, less in carpels and sepals.

Its subcellular location is the nucleus. Transcription factor involved in the genetic control of flower development. The polypeptide is Floral homeotic protein PMADS 2 (PMADS2) (Petunia hybrida (Petunia)).